A 273-amino-acid polypeptide reads, in one-letter code: Type II pantothenate kinase (273 aa).

8-15 (DAGGTLTK) contributes to the ATP binding site. The Proton acceptor role is filled by Glu-76. ATP is bound by residues Thr-105, 127–131 (GGTIM), Phe-143, and Ser-230.

Belongs to the type II pantothenate kinase family. Homodimer.

The protein localises to the cytoplasm. The catalysed reaction is (R)-pantothenate + ATP = (R)-4'-phosphopantothenate + ADP + H(+). It participates in cofactor biosynthesis; coenzyme A biosynthesis; CoA from (R)-pantothenate: step 1/5. Catalyzes the phosphorylation of pantothenate (Pan), the first step in CoA biosynthesis. The protein is Type II pantothenate kinase of Bacillus cereus (strain G9842).